Consider the following 210-residue polypeptide: MALELLTPFTKVELEEEKKESNRKQIGILGGNFNPIHNAHLVVADQVRQQLGLDQVLLMPECKPPHVDAKETIDEKHRLCMLELAIEDVEGLAIETCELERQGISYTYDTMIYLTEQHPDVDYYFIIGADMVDYLPKWHRIDELVKLVQFVGVQRPKYKAGTSYPVIWVDLPLMDISSSMIRDFIKKGRQPNYLLPKQVLDYITQEGLYQ.

It belongs to the NadD family.

The catalysed reaction is nicotinate beta-D-ribonucleotide + ATP + H(+) = deamido-NAD(+) + diphosphate. The protein operates within cofactor biosynthesis; NAD(+) biosynthesis; deamido-NAD(+) from nicotinate D-ribonucleotide: step 1/1. Functionally, catalyzes the reversible adenylation of nicotinate mononucleotide (NaMN) to nicotinic acid adenine dinucleotide (NaAD). The chain is Probable nicotinate-nucleotide adenylyltransferase from Streptococcus pyogenes serotype M18 (strain MGAS8232).